Reading from the N-terminus, the 343-residue chain is S-adenosylmethionine:tRNA ribosyltransferase-isomerase (343 aa).

It belongs to the QueA family. As to quaternary structure, monomer.

Its subcellular location is the cytoplasm. The enzyme catalyses 7-aminomethyl-7-carbaguanosine(34) in tRNA + S-adenosyl-L-methionine = epoxyqueuosine(34) in tRNA + adenine + L-methionine + 2 H(+). It participates in tRNA modification; tRNA-queuosine biosynthesis. Its function is as follows. Transfers and isomerizes the ribose moiety from AdoMet to the 7-aminomethyl group of 7-deazaguanine (preQ1-tRNA) to give epoxyqueuosine (oQ-tRNA). This chain is S-adenosylmethionine:tRNA ribosyltransferase-isomerase, found in Pseudoalteromonas translucida (strain TAC 125).